A 60-amino-acid chain; its full sequence is Beta-toxin BotIT2 (60 aa).

In terms of domain architecture, LCN-type CS-alpha/beta spans 1–60 (DGYIKGYKGCKITCVINDDYCDTECKAEGGTYGYCWKWGLACWCEDLPDEKRWKSETNTC). Disulfide bonds link cysteine 10-cysteine 60, cysteine 14-cysteine 35, cysteine 21-cysteine 42, and cysteine 25-cysteine 44.

The protein belongs to the long (4 C-C) scorpion toxin superfamily. Sodium channel inhibitor family. Beta subfamily. Expressed by the venom gland.

It is found in the secreted. In terms of biological role, beta toxins bind voltage-independently at site-4 of sodium channels (Nav) and shift the voltage of activation toward more negative potentials thereby affecting sodium channel activation and promoting spontaneous and repetitive firing. This toxin specifically acts by inducing a new current with very slow activation/deactivation kinetics due to the transformation of normal fast channels into slow ones. It possess properties of excitatory and depressant toxins. It is highly active on insects and less active on mammals. The polypeptide is Beta-toxin BotIT2 (Buthus occitanus tunetanus (Common European scorpion)).